We begin with the raw amino-acid sequence, 567 residues long: MAQEYDYIIVGAGSAGNTLATRLTEDEGVTVLLLEAGGPDYRFDFRTQMPAALAFPLQGRRYNWAYETDPEPHMNGRRMECGRGKGLGGSSLINGMCYIRGNAMDYDGWAKLPGLEDWTYLDCLPYFRKAETRDIGPNDYHGGEGPVSVTTPKAGNNPLFHAMVEAGVQAGYPRTEDLNGYQQEGFGPMDRTVTPKGRRASTARGYLDTAKKRSTLTIVTHALTDKILFEGKRAVGVSYLQGSTEERVEARARKEVIVSSGAIASPQLLQRSGVGPRALLESLDIPVVHDLPGVGENLQDHLELYLQYACTQPVSLYPSLLWWNQPAIGAEWLFNGTGIGASNQFEAGGFIRTREEFEWPNIQYHFLPVAINYNGSNGVKEHGFQAHMGSMRSPSRGRVQLKSKDPRQHPSILFNYMATEQDWQEFRDGIRLTREIMQQPALDPFRGREISPGIEVQTDEQLDKFVREHAETAFHPSCSCKMGTDDMAVVDGQGRVHGMQGLRVVDASIMPIITTGNLNAPTIMMAEKIADKIRGRQPLPRSTAAYYVAGEAPVRGKPMRDVTPAAQ.

Position 6–35 (6–35) interacts with FAD; the sequence is DYIIVGAGSAGNTLATRLTEDEGVTVLLLE. Residues 182–203 form a disordered region; that stretch reads QQEGFGPMDRTVTPKGRRASTA. The active-site Proton acceptor is His475.

Belongs to the GMC oxidoreductase family. The cofactor is FAD.

It catalyses the reaction choline + A = betaine aldehyde + AH2. The catalysed reaction is betaine aldehyde + NAD(+) + H2O = glycine betaine + NADH + 2 H(+). Its pathway is amine and polyamine biosynthesis; betaine biosynthesis via choline pathway; betaine aldehyde from choline (cytochrome c reductase route): step 1/1. Functionally, involved in the biosynthesis of the osmoprotectant glycine betaine. Catalyzes the oxidation of choline to betaine aldehyde and betaine aldehyde to glycine betaine at the same rate. The chain is Oxygen-dependent choline dehydrogenase from Pseudomonas fluorescens (strain ATCC BAA-477 / NRRL B-23932 / Pf-5).